A 236-amino-acid polypeptide reads, in one-letter code: CBS domain-containing protein CBSX1, chloroplastic (236 aa).

The transit peptide at 1-53 directs the protein to the chloroplast; it reads MDAVLYSVPLSFTPLRASSSPSSPYLLLPRFLSVQPCHKFTFSRSFPSKSRIP. The segment at 47-66 is disordered; the sequence is PSKSRIPSASSAAGSTLMTN. Residue serine 54 is modified to N-acetylserine. 2 CBS domains span residues 81–142 and 175–231; these read MTKK…GRTE and MTPA…IKRS.

Its subcellular location is the plastid. The protein localises to the chloroplast. The polypeptide is CBS domain-containing protein CBSX1, chloroplastic (CBSX1) (Arabidopsis thaliana (Mouse-ear cress)).